A 151-amino-acid chain; its full sequence is Putative esterase VNG_1336C (151 aa).

Belongs to the thioesterase PaaI family.

The polypeptide is Putative esterase VNG_1336C (Halobacterium salinarum (strain ATCC 700922 / JCM 11081 / NRC-1) (Halobacterium halobium)).